A 541-amino-acid chain; its full sequence is Zinc finger protein 329 (541 aa).

Serine 50 carries the phosphoserine modification. C2H2-type zinc fingers lie at residues 203–225, 231–253, 259–281, 287–309, 315–337, 343–365, 371–393, 399–421, 427–449, 455–477, 483–505, and 511–533; these read YRCT…HRTH, YTCN…QRIH, YECS…QRIH, YECL…QRTH, YRCN…LRIH, YECS…ERTH, FECA…QKIH, YECK…QRIH, YGCN…QRTH, YECN…QRIH, YQCP…QRLH, and SRCP…QRAH.

It belongs to the krueppel C2H2-type zinc-finger protein family.

The protein localises to the nucleus. May be involved in transcriptional regulation. This Homo sapiens (Human) protein is Zinc finger protein 329 (ZNF329).